Consider the following 168-residue polypeptide: MRTHFMKNQSVKRNQHVSTPAIPASICADGLISELVHNEDHPGMTQLLLLPLLQQLGTQSRWQLWLTSQQKLSRDWLLRSGLPLDKVMQSPYCGTITTVEAMIKALQTGNYSVVLGWLADEISETERKRLQQAAKSGQALGLIMRSECNVLPSARPLHGLRIQSSLYH.

The interval 105-111 (ALQTGNY) is ftsZ binding.

The protein belongs to the SulA family. As to quaternary structure, interacts with FtsZ. Post-translationally, is rapidly cleaved and degraded by the Lon protease once DNA damage is repaired.

In terms of biological role, component of the SOS system and an inhibitor of cell division. Accumulation of SulA causes rapid cessation of cell division and the appearance of long, non-septate filaments. In the presence of GTP, binds a polymerization-competent form of FtsZ in a 1:1 ratio, thus inhibiting FtsZ polymerization and therefore preventing it from participating in the assembly of the Z ring. This mechanism prevents the premature segregation of damaged DNA to daughter cells during cell division. This chain is Cell division inhibitor SulA, found in Erwinia pyrifoliae (strain DSM 12163 / CIP 106111 / Ep16/96).